The sequence spans 926 residues: Ubiquitin carboxyl-terminal hydrolase 4 (926 aa).

The 124-residue stretch at 205-328 (SQMEILLIDI…WLKSNYGRQV (124 aa)) folds into the Rhodanese domain. S443 is subject to Phosphoserine. One can recognise a USP domain in the interval 562–923 (VGLENLGNSC…NAYVLFYHRV (362 aa)). C571 functions as the Nucleophile in the catalytic mechanism. The active-site Proton acceptor is the H880.

The protein belongs to the peptidase C19 family. Interacts with BRO1, RFU1 and VPS32. Associates with the 26S proteasome.

It localises to the cytoplasm. It is found in the late endosome membrane. The catalysed reaction is Thiol-dependent hydrolysis of ester, thioester, amide, peptide and isopeptide bonds formed by the C-terminal Gly of ubiquitin (a 76-residue protein attached to proteins as an intracellular targeting signal).. With respect to regulation, RFU1 is an inhibitor of deubiquitination activity. Functionally, ubiquitin thioesterase that acts at the late endosome/prevacuolar compartment to recover ubiquitin from ubiquitinated membrane proteins en route to the vacuole. Also removes ubiquitin from soluble proteins targeted to proteasomes. Is essential to maintain a normal level of free ubiquitin. Involved in the ammonium-induced down-regulation of the GAP1 permease and the UME3 destruction in response to oxidative stress. Has a role in the RAD9 checkpoint response to TOP1 poisons. Required for promoting coordination of DNA replication and avoids DNA overreplication. The protein is Ubiquitin carboxyl-terminal hydrolase 4 (DOA4) of Saccharomyces cerevisiae (strain RM11-1a) (Baker's yeast).